Reading from the N-terminus, the 257-residue chain is Pimeloyl-[acyl-carrier protein] methyl ester esterase (257 aa).

Residues 16-240 (LVLIHGWGMN…EQASHAPFIS (225 aa)) form the AB hydrolase-1 domain. Residues Trp22, 82–83 (SL), and 143–147 (FMALQ) each bind substrate. The Nucleophile role is filled by Ser82. Residues Asp207 and His235 contribute to the active site. His235 serves as a coordination point for substrate.

Belongs to the AB hydrolase superfamily. Carboxylesterase BioH family. Monomer.

It is found in the cytoplasm. The enzyme catalyses 6-carboxyhexanoyl-[ACP] methyl ester + H2O = 6-carboxyhexanoyl-[ACP] + methanol + H(+). The protein operates within cofactor biosynthesis; biotin biosynthesis. Its function is as follows. The physiological role of BioH is to remove the methyl group introduced by BioC when the pimeloyl moiety is complete. It allows to synthesize pimeloyl-ACP via the fatty acid synthetic pathway through the hydrolysis of the ester bonds of pimeloyl-ACP esters. The sequence is that of Pimeloyl-[acyl-carrier protein] methyl ester esterase from Aliivibrio fischeri (strain ATCC 700601 / ES114) (Vibrio fischeri).